The following is a 246-amino-acid chain: MTNNAAAPLYSLRGLPLIGWRDMSHALNYLFADGQLKQGTLVAINAEKLLTAEDNPEVRALIAAAEFKYADGISVVRSIRKKFPQAQVSRVAGADLWEALMARAGKEGTPVFLVGGKPEVLAQTEAKLRTQWNVNIVGSQDGYFTPEQRQALFSRIHASGAKIVTVAMGSPKQELLMRDCREVHPHALYMGVGGTYDVFTGHVKRAPKIWQNLGLEWLYRLLSQPKRITRQMRLLRYLRWHYTGDL.

It belongs to the glycosyltransferase 26 family.

The enzyme catalyses UDP-N-acetyl-alpha-D-mannosaminouronate + N-acetyl-alpha-D-glucosaminyl-di-trans,octa-cis-undecaprenyl diphosphate = beta-D-ManNAcA-(1-&gt;4)-alpha-D-GlcNAc-di-trans,octa-cis-undecaprenyl diphosphate + UDP + H(+). The protein operates within bacterial outer membrane biogenesis; enterobacterial common antigen biosynthesis. Its function is as follows. Catalyzes the synthesis of Und-PP-GlcNAc-ManNAcA (Lipid II), the second lipid-linked intermediate involved in enterobacterial common antigen (ECA) synthesis. This is UDP-N-acetyl-D-mannosaminuronic acid transferase from Salmonella schwarzengrund (strain CVM19633).